Here is a 502-residue protein sequence, read N- to C-terminus: Xylan O-acetyltransferase 13 (502 aa).

Residues 1–53 (MWSALFSHLREVHKRSGVKEEKLIMKSPPAAGEAGCHKPQATATNKMTVLQSP) are Cytoplasmic-facing. A helical; Signal-anchor for type II membrane protein membrane pass occupies residues 54–76 (LGLRTILTSLVAFFIVVSSVSLL). Topologically, residues 77-502 (FDRGQDAQAQ…EFLYAYIMHK (426 aa)) are lumenal. 4 disulfide bridges follow: Cys-152/Cys-203, Cys-174/Cys-239, Cys-183/Cys-483, and Cys-399/Cys-479. Asn-153, Asn-163, Asn-189, and Asn-209 each carry an N-linked (GlcNAc...) asparagine glycan. The GDS motif signature appears at 226-228 (GDS). Ser-228 serves as the catalytic Nucleophile. Asn-255, Asn-267, Asn-372, Asn-401, and Asn-442 each carry an N-linked (GlcNAc...) asparagine glycan. Asp-478 acts as the Proton donor in catalysis. A DXXH motif motif is present at residues 478–481 (DCTH). His-481 (proton acceptor) is an active-site residue.

Belongs to the PC-esterase family. TBL subfamily.

The protein resides in the golgi apparatus membrane. Functionally, xylan acetyltransferase required for 2-O- and 3-O-monoacetylation of xylosyl residues in xylan. Catalyzes the 2-O-acetylation of xylan, followed by nonenzymatic acetyl migration to the O-3 position, resulting in products that are monoacetylated at both O-2 and O-3 positions. The protein is Xylan O-acetyltransferase 13 of Oryza sativa subsp. japonica (Rice).